Consider the following 77-residue polypeptide: Pi-stichotoxin-Hmg5a (77 aa).

The first 21 residues, 1–21, serve as a signal peptide directing secretion; the sequence is MDYQRLLFLFAVAMVITTTVA. Residues 22 to 34 constitute a propeptide that is removed on maturation; it reads LPQDTALMDGQLQ. 3 disulfides stabilise this stretch: cysteine 40-cysteine 73, cysteine 42-cysteine 66, and cysteine 56-cysteine 74.

This sequence belongs to the sea anemone type 3 (BDS) potassium channel toxin family.

It is found in the secreted. The protein localises to the nematocyst. In terms of biological role, toxin that inhibits rat ASIC3 channels (IC(50)=13.8 uM). Also able to bind T.californica muscle-type nicotinic acetylcholine receptors (nAChR), and human alpha-7/CHRNA7 nicotinic acetylcholine receptors. This Heteractis magnifica (Magnificent sea anemone) protein is Pi-stichotoxin-Hmg5a.